The chain runs to 564 residues: MFS-type transporter astH (564 aa).

N-linked (GlcNAc...) asparagine glycosylation is present at Asn23. A disordered region spans residues 26–59; sequence KDTLVNCSPDPENPEKGQASSPRTQISVDDNEES. The segment covering 43–53 has biased composition (polar residues); that stretch reads QASSPRTQISV. The next 4 membrane-spanning stretches (helical) occupy residues 69 to 89, 106 to 126, 143 to 163, and 197 to 217; these read LAMIMISLCLAVFCLALDTTI, DVGWYGSAYLLTTSALTLSFG, GMFEIGSLICGATPNSLGLII, and GILGGLFGVASVVGPLIGGAF. The N-linked (GlcNAc...) asparagine glycan is linked to Asn220. Helical transmembrane passes span 225-245, 266-286, 297-317, 339-359, 375-395, and 396-416; these read WCFYINLPLGAVTGLFLILFF, LLGSLCFLPAIICVLLALQWG, IIALFTVFGVLLLAFAGVQWW, LFSFCLNASFIIFTYYLPMWF, LPMVLAVVIFSIISGGLVGAL, and GYYTPFMVIAPLIAAIGAGLL. An N-linked (GlcNAc...) asparagine glycan is attached at Asn425. 2 helical membrane passes run 461–481 and 537–557; these read TGTVIVMFMQTIGGAIFMSVG and FYVAVAMAVLALPGALVMQWI.

This sequence belongs to the major facilitator superfamily. TCR/Tet family.

Its subcellular location is the membrane. Its function is as follows. MFS-type transporter; part of the gene cluster that mediates the biosynthesis of astellolides, drimane-type sesquiterpene esters that show antimicrobial, anti-inflammatory, and anti-tumor activities. Seems not to be involved in astellolides translocation. This is MFS-type transporter astH from Aspergillus oryzae (strain ATCC 42149 / RIB 40) (Yellow koji mold).